Here is a 438-residue protein sequence, read N- to C-terminus: Coenzyme A disulfide reductase (438 aa).

8-33 (GAVAGGATCASQIRRLDKESDIIIFE) is an FAD binding site. Positions 15, 19, 22, 39, and 42 each coordinate substrate. Cysteine 43 acts as the Nucleophile in catalysis. Catalysis depends on cysteine 43, which acts as the Redox-active. Lysine 71 lines the substrate pocket. Position 151–166 (151–166 (VLVVGAGYVSLEVLEN)) interacts with NADP(+). 267-277 (TNVPNIYAIGD) serves as a coordination point for FAD. Residue histidine 299 participates in substrate binding. Tyrosine 419 provides a ligand contact to FAD. Lysine 427 contacts substrate.

It belongs to the class-III pyridine nucleotide-disulfide oxidoreductase family. As to quaternary structure, homodimer. Requires FAD as cofactor.

The catalysed reaction is NADP(+) + 2 CoA = CoA-disulfide + NADPH + H(+). Functionally, catalyzes specifically the NADPH-dependent reduction of coenzyme A disulfide. Is also active with other disulfide substrates containing at least one 4'-phosphopantethienyl moiety such as 4,4'-diphosphopantethine, but is not able to reduce oxidized glutathione, cystine, pantethine, or H(2)O(2). The protein is Coenzyme A disulfide reductase (cdr) of Staphylococcus aureus (strain NCTC 8325 / PS 47).